The following is a 435-amino-acid chain: Gamma-glutamyl phosphate reductase (435 aa).

It belongs to the gamma-glutamyl phosphate reductase family.

It localises to the cytoplasm. It carries out the reaction L-glutamate 5-semialdehyde + phosphate + NADP(+) = L-glutamyl 5-phosphate + NADPH + H(+). Its pathway is amino-acid biosynthesis; L-proline biosynthesis; L-glutamate 5-semialdehyde from L-glutamate: step 2/2. Functionally, catalyzes the NADPH-dependent reduction of L-glutamate 5-phosphate into L-glutamate 5-semialdehyde and phosphate. The product spontaneously undergoes cyclization to form 1-pyrroline-5-carboxylate. The polypeptide is Gamma-glutamyl phosphate reductase (Aquifex aeolicus (strain VF5)).